We begin with the raw amino-acid sequence, 492 residues long: V-type proton ATPase subunit B 1 (492 aa).

Belongs to the ATPase alpha/beta chains family. V-ATPase is a heteromultimeric enzyme composed of a peripheral catalytic V1 complex (main components: subunits A, B, C, D, E, and F) attached to an integral membrane V0 proton pore complex (main component: the proteolipid protein).

Its function is as follows. Non-catalytic subunit of the peripheral V1 complex of vacuolar ATPase. V-ATPase is responsible for acidifying a variety of intracellular compartments in eukaryotic cells. The chain is V-type proton ATPase subunit B 1 from Acetabularia acetabulum (Mermaid's wine glass).